The following is a 203-amino-acid chain: CASP-like protein 2U5 (203 aa).

Over 1–31 (MSEHRIPVAADKQISPPISAGEQKGCKGLKR) the chain is Cytoplasmic. A helical transmembrane segment spans residues 32–52 (TDLMLRFAAFVCCAVTMVVLI). The Extracellular segment spans residues 53–84 (TDKQTSAIQVPGFNNLTITKTVSFDLAKAFVY). Residue Asn-67 is glycosylated (N-linked (GlcNAc...) asparagine). A helical membrane pass occupies residues 85 to 105 (LVSAAGIGAGYTLLVLVLSII). The Cytoplasmic portion of the chain corresponds to 106-111 (SAERSK). The chain crosses the membrane as a helical span at residues 112–132 (AIAWFIFVFDQLITYVLLAAA). The Extracellular segment spans residues 133–164 (AASTEVAYMGAHAPPEASWLKVCSLFGRFCHQ). Residues 165-185 (LGASLVTSFISTVLFAFSAAI) form a helical membrane-spanning segment. Residues 186–203 (SAYYLFSNTNVRPAYSKG) are Cytoplasmic-facing.

Belongs to the Casparian strip membrane proteins (CASP) family. Homodimer and heterodimers.

It is found in the cell membrane. This chain is CASP-like protein 2U5, found in Selaginella moellendorffii (Spikemoss).